Here is a 689-residue protein sequence, read N- to C-terminus: Glycine--tRNA ligase beta subunit (689 aa).

The protein belongs to the class-II aminoacyl-tRNA synthetase family. Tetramer of two alpha and two beta subunits.

The protein localises to the cytoplasm. The enzyme catalyses tRNA(Gly) + glycine + ATP = glycyl-tRNA(Gly) + AMP + diphosphate. The sequence is that of Glycine--tRNA ligase beta subunit from Lacticaseibacillus paracasei (strain ATCC 334 / BCRC 17002 / CCUG 31169 / CIP 107868 / KCTC 3260 / NRRL B-441) (Lactobacillus paracasei).